Here is a 564-residue protein sequence, read N- to C-terminus: MESITKVSMSVCPFVRSTSTQALRQLSQTSGALANQARQCPIAGNAIRAKEISIRSYSSATKPARATAATPSTPEATFNVTSSFELGSKETAFDYNGYLGNELEKKRSDKSYRYFNNINRLANEFPKAHRTQEEDKVTVWCSNDYLGMGKNENTLKEMKRVLDKYGSGAGGTRNIAGHNSHAIKLESELAALHKHDAALVFSSCFVANDAVLSLLGQKIKDLVIFSDELNHASMIQGIRNSRARKHIFKHNNLADLESKLAQYPKSTPKLIAFESVYSMCGSIAPIEAICDLAEKYGALTFLDEVHAVGMYGPHGAGVAEHLNFEAHLKSGIERPEITTVMSRVDMVTGTLGKAYGVVGGYITGKTNLIDWFRSYAPGFIFTTSLPPAIMAGCSASIRYQRATLKDRIAQQKNTRLVKNNLNELGIPVIPNPSHIVPVLVGNAADAKRASDLLLNKHDIYVQAINFPTVPIGEERLRITPTPGHGPELSKQLVEAVDSVFTELNLNRINDWKKLGGLVGVGVEGAAKVEHIWTEEQLALTDADLNPNVVNPAISPLDVSSGIST.

Residues M1–Y57 constitute a mitochondrion transit peptide. Substrate contacts are provided by R113, S226, and K245. The pyridoxal 5'-phosphate site is built by S278, H306, and T350. K353 is an active-site residue. Position 353 is an N6-(pyridoxal phosphate)lysine (K353). T382 and T383 together coordinate pyridoxal 5'-phosphate. Residue T468 coordinates substrate.

Belongs to the class-II pyridoxal-phosphate-dependent aminotransferase family. As to quaternary structure, homodimer. The cofactor is pyridoxal 5'-phosphate.

Its subcellular location is the mitochondrion matrix. The enzyme catalyses succinyl-CoA + glycine + H(+) = 5-aminolevulinate + CO2 + CoA. It functions in the pathway porphyrin-containing compound metabolism; protoporphyrin-IX biosynthesis; 5-aminolevulinate from glycine: step 1/1. Its function is as follows. Catalyzes the synthesis of 5-aminolevulinate (ALA) from succinyl-CoA and glycine, the first and rate-limiting step in heme biosynthesis. The sequence is that of 5-aminolevulinate synthase, mitochondrial (HEM1) from Candida albicans (strain SC5314 / ATCC MYA-2876) (Yeast).